The following is a 799-amino-acid chain: MNIKSLRKKNIQNMDQEEVYNRIKENVAHMDEIQRTMEKQQQTFFQMSLQSKQIAESMKKYSMDAAYFNSRIPITDCLSRASEWQNSISEVFNHLGNLLYDRTTQPLKQTISIQLEMVKEGKKKLKNLSTDTSKSSSANLKKDTEAFERTQKETLQLYNDSELALENSTVQTILSSFESYNDFFQRGVFQMSKIKSDIDNYKKIILETNKVAAKLRNYVPKKTFGIKLEEVFARESNKPLPSFLDEIFRYLEKESINTEGMFRVSAGKSSLEALQQKIESGAPLELSASIIDPHCVSSVLKLFLRSLPEPLVLYNVYSKYLTVAKNNNNNNNNNNNNISNSSSNLNIVGSSGNNNSGGGSGGTIITELRRLISTLPVCNQALLKQILLICSLMNQHRDVTKMDLTNLSVVIGPSILEPIPNLKAEDIQRPETFADFNSLFCLLVEHVLTIFPQVSQTSMDMASLPTTIGKLRSQSDISSQTKPLPSLPTSPQNRSAIITGDSSSPSLNTPPVKSSLNSSDFVIVDNGSNNNNNNNTTNTITNNGIADTATPPPPTTPTAPTTPPPPTTPTSNNIATPIININIPNSSNNNNNNNTKRINNKSNLKVDDYLTPIDMQIYYINISSNLGRIKSYVDDIETVNQGIGLIKLFKKISDDHMAPIKNILNYKFKTEKPPMSNDEDKVLRIKRTLFYTYEITMELISHANNTFESSSIEEPTELSKKLEESFKQLDTILTDELSNIEKQQQQQQQQTNDGGGSGISSNTNTSISGDNSENGDSLNSSTSNQSPLNSSILTQLSNQ.

Positions 226–451 (IKLEEVFARE…LLVEHVLTIF (226 aa)) constitute a Rho-GAP domain. The segment covering 472-520 (RSQSDISSQTKPLPSLPTSPQNRSAIITGDSSSPSLNTPPVKSSLNSSD) has biased composition (polar residues). Disordered stretches follow at residues 472-572 (RSQS…PTSN) and 741-799 (EKQQ…LSNQ). Positions 525 to 549 (DNGSNNNNNNNTTNTITNNGIADTA) are enriched in low complexity. The segment covering 550 to 568 (TPPPPTTPTAPTTPPPPTT) has biased composition (pro residues). 2 stretches are compositionally biased toward low complexity: residues 743 to 752 (QQQQQQQQTN) and 759 to 791 (ISSN…LNSS).

Its subcellular location is the cytoplasm. Functionally, rho GTPase-activating protein involved in the signal transduction pathway. This is Rho GTPase-activating protein gacI (gacI) from Dictyostelium discoideum (Social amoeba).